A 99-amino-acid chain; its full sequence is MALTFKDIERVANLARLELRPDETEHTLSQLNGFFALVEQMQAVNTDGVEPLAHPAALLGEVALRLREDIASEPNQREASQASAPAVERGLFLVPKVIE.

It belongs to the GatC family. As to quaternary structure, heterotrimer of A, B and C subunits.

It carries out the reaction L-glutamyl-tRNA(Gln) + L-glutamine + ATP + H2O = L-glutaminyl-tRNA(Gln) + L-glutamate + ADP + phosphate + H(+). The enzyme catalyses L-aspartyl-tRNA(Asn) + L-glutamine + ATP + H2O = L-asparaginyl-tRNA(Asn) + L-glutamate + ADP + phosphate + 2 H(+). Functionally, allows the formation of correctly charged Asn-tRNA(Asn) or Gln-tRNA(Gln) through the transamidation of misacylated Asp-tRNA(Asn) or Glu-tRNA(Gln) in organisms which lack either or both of asparaginyl-tRNA or glutaminyl-tRNA synthetases. The reaction takes place in the presence of glutamine and ATP through an activated phospho-Asp-tRNA(Asn) or phospho-Glu-tRNA(Gln). This Polaromonas naphthalenivorans (strain CJ2) protein is Aspartyl/glutamyl-tRNA(Asn/Gln) amidotransferase subunit C.